The sequence spans 119 residues: NADH-quinone oxidoreductase subunit A (119 aa).

Transmembrane regions (helical) follow at residues 7–27 (FPVL…MFLG), 63–83 (LIAI…PWGV), and 88–108 (IGWL…VGFV).

It belongs to the complex I subunit 3 family. As to quaternary structure, NDH-1 is composed of 14 different subunits. Subunits NuoA, H, J, K, L, M, N constitute the membrane sector of the complex.

Its subcellular location is the cell inner membrane. It catalyses the reaction a quinone + NADH + 5 H(+)(in) = a quinol + NAD(+) + 4 H(+)(out). Its function is as follows. NDH-1 shuttles electrons from NADH, via FMN and iron-sulfur (Fe-S) centers, to quinones in the respiratory chain. The immediate electron acceptor for the enzyme in this species is believed to be ubiquinone. Couples the redox reaction to proton translocation (for every two electrons transferred, four hydrogen ions are translocated across the cytoplasmic membrane), and thus conserves the redox energy in a proton gradient. This chain is NADH-quinone oxidoreductase subunit A, found in Polynucleobacter necessarius subsp. necessarius (strain STIR1).